A 189-amino-acid chain; its full sequence is Pyridoxal 5'-phosphate synthase subunit PdxT (189 aa).

46–48 (GES) provides a ligand contact to L-glutamine. Residue C78 is the Nucleophile of the active site. L-glutamine-binding positions include R107 and 136–137 (IR). Residues H173 and E175 each act as charge relay system in the active site.

The protein belongs to the glutaminase PdxT/SNO family. As to quaternary structure, in the presence of PdxS, forms a dodecamer of heterodimers. Only shows activity in the heterodimer.

The enzyme catalyses aldehydo-D-ribose 5-phosphate + D-glyceraldehyde 3-phosphate + L-glutamine = pyridoxal 5'-phosphate + L-glutamate + phosphate + 3 H2O + H(+). It carries out the reaction L-glutamine + H2O = L-glutamate + NH4(+). It functions in the pathway cofactor biosynthesis; pyridoxal 5'-phosphate biosynthesis. Its function is as follows. Catalyzes the hydrolysis of glutamine to glutamate and ammonia as part of the biosynthesis of pyridoxal 5'-phosphate. The resulting ammonia molecule is channeled to the active site of PdxS. This chain is Pyridoxal 5'-phosphate synthase subunit PdxT, found in Roseiflexus sp. (strain RS-1).